A 351-amino-acid chain; its full sequence is MATTGRVLLLSPPSLSSHPEKLNTVLKSHTRDKTDLQMLDRLAHGLVSLPESTYDIVLLLTGADNTLAETHSLLNRELIQRVVHSLRPAGKLRNRENKPWGLSDGNGNNANSSRRYNDDEQRFRNEVILAGLVFDDKGELLKPDIGAQQAIPLKLGRRRKEKEKTDTLASSANYITNGTVDAPASNGISAPIPAAKTTENNPVPPGVGFIDFSDDFGMPAEDDLEDSDEELIDEDELLDEDDMGRQIVQPPECRPKPGKRRRACKDCSCGLSQKLEAKDKAQRATADKALETMKLGSSELAEVDFTVQGKVGSCGNCSLGDAFRCDGCPYIGLPAFKQGEEVRLLNNDVQL.

Residues 1–151 form an N-terminal SAM-like domain region; sequence MATTGRVLLL…KPDIGAQQAI (151 aa). Residues 93–118 form a disordered region; that stretch reads RNRENKPWGLSDGNGNNANSSRRYND. Residues 105 to 114 are compositionally biased toward polar residues; it reads GNGNNANSSR. A linker region spans residues 152–243; that stretch reads PLKLGRRRKE…EDELLDEDDM (92 aa). [2Fe-2S] cluster contacts are provided by cysteine 253, cysteine 264, cysteine 267, and cysteine 269. The tract at residues 253-269 is fe-S binding site A; the sequence is CRPKPGKRRRACKDCSC. [4Fe-4S] cluster contacts are provided by cysteine 314, cysteine 317, cysteine 325, and cysteine 328. Short sequence motifs (cx2C motif) lie at residues 314-317 and 325-328; these read CGNC and CDGC. Residues 314-328 form a fe-S binding site B region; that stretch reads CGNCSLGDAFRCDGC.

The protein belongs to the anamorsin family. In terms of assembly, monomer. Interacts with TAH18. Interacts with MIA40. Requires [2Fe-2S] cluster as cofactor. It depends on [4Fe-4S] cluster as a cofactor.

Its subcellular location is the cytoplasm. The protein resides in the mitochondrion intermembrane space. Its function is as follows. Component of the cytosolic iron-sulfur (Fe-S) protein assembly (CIA) machinery required for the maturation of extramitochondrial Fe-S proteins. Part of an electron transfer chain functioning in an early step of cytosolic Fe-S biogenesis, facilitating the de novo assembly of a [4Fe-4S] cluster on the scaffold complex CFD1-NBP35. Electrons are transferred to DRE2 from NADPH via the FAD- and FMN-containing protein TAH18. TAH18-DRE2 are also required for the assembly of the diferric tyrosyl radical cofactor of ribonucleotide reductase (RNR), probably by providing electrons for reduction during radical cofactor maturation in the catalytic small subunit RNR2. The chain is Fe-S cluster assembly protein DRE2 from Ajellomyces capsulatus (strain H143) (Darling's disease fungus).